A 282-amino-acid polypeptide reads, in one-letter code: Undecaprenyl-diphosphatase (282 aa).

6 helical membrane-spanning segments follow: residues 51 to 71 (TLVA…AAVI), 87 to 107 (MGWM…LFET), 115 to 135 (SLYW…LAEG), 191 to 211 (ATAA…AGLY), 229 to 249 (NILV…AFLL), and 259 to 279 (IFIA…ATGV).

This sequence belongs to the UppP family.

It is found in the cell inner membrane. It carries out the reaction di-trans,octa-cis-undecaprenyl diphosphate + H2O = di-trans,octa-cis-undecaprenyl phosphate + phosphate + H(+). Its function is as follows. Catalyzes the dephosphorylation of undecaprenyl diphosphate (UPP). Confers resistance to bacitracin. In Pelodictyon phaeoclathratiforme (strain DSM 5477 / BU-1), this protein is Undecaprenyl-diphosphatase.